The following is a 172-amino-acid chain: uncharacterized protein (172 aa).

The first 22 residues, 1–22 (MKLFQLLLLVLTISSFIISNNG), serve as a signal peptide directing secretion. Residues 23–140 (LVESHQGRMH…FSYENSSNET (118 aa)) lie on the Extracellular side of the membrane. The interval 27 to 69 (HQGRMHRGSGERHHRAGGNQQQPQPPSEQQVESSYNSNDDGSS) is disordered. Positions 29-42 (GRMHRGSGERHHRA) are enriched in basic residues. The segment covering 53–69 (SEQQVESSYNSNDDGSS) has biased composition (low complexity). N-linked (GlcNAc...) asparagine glycosylation is found at N135 and N138. Residues 141-161 (IVIYINPVTLVFTLVLLLTFI) form a helical membrane-spanning segment. Over 162–172 (VLTITQSLRKY) the chain is Cytoplasmic.

Its subcellular location is the membrane. This is an uncharacterized protein from Dictyostelium discoideum (Social amoeba).